The primary structure comprises 316 residues: Putative metal-binding protein TP_0034 (316 aa).

The N-terminal stretch at Met1–Ala19 is a signal peptide. His68, His146, and His210 together coordinate a divalent metal cation.

It belongs to the bacterial solute-binding protein 9 family.

The protein localises to the periplasm. Functionally, part of an ATP-binding cassette (ABC) transport system involved in metal import. Binds a metal with high affinity and specificity and delivers it to the membrane permease for translocation into the cytoplasm. The chain is Putative metal-binding protein TP_0034 from Treponema pallidum (strain Nichols).